The chain runs to 156 residues: Guanine deaminase (156 aa).

In terms of domain architecture, CMP/dCMP-type deaminase spans 1–132; the sequence is MNHETFLKRA…KPAEERTIPF (132 aa). His53 lines the Zn(2+) pocket. Catalysis depends on Glu55, which acts as the Proton donor. 2 residues coordinate Zn(2+): Cys83 and Cys86.

Belongs to the cytidine and deoxycytidylate deaminase family. Requires Zn(2+) as cofactor.

It carries out the reaction guanine + H2O + H(+) = xanthine + NH4(+). Its pathway is purine metabolism; guanine degradation; xanthine from guanine: step 1/1. Its function is as follows. Catalyzes the hydrolytic deamination of guanine, producing xanthine and ammonia. This Bacillus subtilis (strain 168) protein is Guanine deaminase (guaD).